Reading from the N-terminus, the 264-residue chain is tRNA (guanine-N(1)-)-methyltransferase (264 aa).

Residues Gly125 and 145–150 (LGDFVL) contribute to the S-adenosyl-L-methionine site.

Belongs to the RNA methyltransferase TrmD family. In terms of assembly, homodimer.

Its subcellular location is the cytoplasm. It catalyses the reaction guanosine(37) in tRNA + S-adenosyl-L-methionine = N(1)-methylguanosine(37) in tRNA + S-adenosyl-L-homocysteine + H(+). Its function is as follows. Specifically methylates guanosine-37 in various tRNAs. The chain is tRNA (guanine-N(1)-)-methyltransferase from Burkholderia vietnamiensis (strain G4 / LMG 22486) (Burkholderia cepacia (strain R1808)).